The primary structure comprises 632 residues: 1-deoxy-D-xylulose-5-phosphate synthase (632 aa).

Residues His73 and 114–116 (SHA) each bind thiamine diphosphate. Asp146 contacts Mg(2+). Residues 147–148 (GA), Asn176, Tyr287, and Glu368 contribute to the thiamine diphosphate site. Residue Asn176 coordinates Mg(2+).

This sequence belongs to the transketolase family. DXPS subfamily. As to quaternary structure, homodimer. It depends on Mg(2+) as a cofactor. Thiamine diphosphate is required as a cofactor.

It catalyses the reaction D-glyceraldehyde 3-phosphate + pyruvate + H(+) = 1-deoxy-D-xylulose 5-phosphate + CO2. It participates in metabolic intermediate biosynthesis; 1-deoxy-D-xylulose 5-phosphate biosynthesis; 1-deoxy-D-xylulose 5-phosphate from D-glyceraldehyde 3-phosphate and pyruvate: step 1/1. In terms of biological role, catalyzes the acyloin condensation reaction between C atoms 2 and 3 of pyruvate and glyceraldehyde 3-phosphate to yield 1-deoxy-D-xylulose-5-phosphate (DXP). The sequence is that of 1-deoxy-D-xylulose-5-phosphate synthase from Corynebacterium glutamicum (strain R).